Reading from the N-terminus, the 485-residue chain is Forkhead box protein N3 (485 aa).

Disordered regions lie at residues 1 to 54 and 85 to 108; these read MGPV…KGGM and PVQDIDDDTPPSPAQSDMPYDAKQ. Polar residues predominate over residues 16–30; it reads ISVSSQCYRSSTLSN. A DNA-binding region (fork-head) is located at residues 113 to 209; sequence KPPYSFSCLI…QALKKTPYHP (97 aa). Disordered stretches follow at residues 316–357 and 401–449; these read MESE…ISSS and PLVE…MKEA. Residues 338–357 are compositionally biased toward low complexity; it reads SSAKSANKRSSSPSDSISSS. Over residues 410–422 the composition is skewed to basic residues; it reads QHKKKQHLLKLRR.

At early cleavage stages, localized within the animal half of the embryo. At gastrulation, expression expands over the whole embryo excluding the future endodermal cells of the blastopore. During neurulation, expressed in the prospective eye field and in the neural crest cells. Strongly enriched in the eye vesicles at stage 26. From stage 29 onwards, expressed predominantly in the eye, the branchial arches and the vagal ganglion. At stage 38, expressed throughout the head with strongest expression in the head mesenchyme and the eye lens.

It localises to the nucleus. Its function is as follows. Acts as a transcriptional repressor. May be involved in DNA damage-inducible cell cycle arrests (checkpoints). The sequence is that of Forkhead box protein N3 from Xenopus laevis (African clawed frog).